The sequence spans 955 residues: Anoctamin-4 (955 aa).

The Extracellular segment spans residues 1-352 (MEASSSGITN…FGEKIGLYFA (352 aa)). The disordered stretch occupies residues 72 to 100 (CKDDDSLLHPGNLTSTSDDASRLEAGGET). N83, N105, N257, and N288 each carry an N-linked (GlcNAc...) asparagine glycan. A helical transmembrane segment spans residues 353–373 (WLGWYTGMLFPAAFIGLFVFL). At 374-424 (YGVTTLDHSQVSKEVCQATDIIMCPVCDKYCPFMRLSDSCVYAKVTHLFDN) the chain is on the cytoplasmic side. Residues 425-445 (GATVFFAVFMAVWATVFLEFW) form a helical membrane-spanning segment. The Extracellular portion of the chain corresponds to 446 to 505 (KRRRAVIAYDWDLIDWEEEEEEIRPQFEAKYSKKERMNPISGKPEPYQAFTDKCSRLIVS). Residues 506–526 (ASGIFFMICVVIAAVFGIVIY) traverse the membrane as a helical segment. Over 527–547 (RVVTVSTFAAFKWALIRNNSQ) the chain is Cytoplasmic. The chain crosses the membrane as a helical span at residues 548 to 568 (VATTGTAVCINFCIIMLLNVL). Topologically, residues 569–595 (YEKVALLLTNLEQPRTESEWENSFTLK) are extracellular. The helical transmembrane segment at 596 to 616 (MFLFQFVNLNSSTFYIAFFLG) threads the bilayer. The Cytoplasmic segment spans residues 617-715 (RFTGHPGAYL…AYGLFDEYLE (99 aa)). Residues 716-736 (MILQFGFTTIFVAAFPLAPLL) traverse the membrane as a helical segment. Residues 737 to 768 (ALLNNIIEIRLDAYKFVTQWRRPLASRAKDIG) are Extracellular-facing. Residues 769–789 (IWYGILEGIGILSVITNAFVI) traverse the membrane as a helical segment. The Cytoplasmic portion of the chain corresponds to 790–885 (AITSDFIPRL…QFWHVLAARL (96 aa)). Residues 886 to 906 (AFIIVFEHLVFCIKHLISYLI) form a helical membrane-spanning segment. Residues 907-955 (PDLPKDLRDRMRREKYLIQEMMYEAELERLQKERKERKKNGKAHHNEWP) lie on the Extracellular side of the membrane.

This sequence belongs to the anoctamin family.

It is found in the cell membrane. It carries out the reaction a 1,2-diacyl-sn-glycero-3-phospho-L-serine(in) = a 1,2-diacyl-sn-glycero-3-phospho-L-serine(out). It catalyses the reaction a beta-D-galactosyl-(1&lt;-&gt;1')-N-acylsphing-4-enine(out) = a beta-D-galactosyl-(1&lt;-&gt;1')-N-acylsphing-4-enine(in). The catalysed reaction is a 1,2-diacyl-sn-glycero-3-phosphocholine(in) = a 1,2-diacyl-sn-glycero-3-phosphocholine(out). Its function is as follows. Has calcium-dependent phospholipid scramblase activity; scrambles phosphatidylserine, phosphatidylcholine and galactosylceramide. Does not exhibit calcium-activated chloride channel (CaCC) activity. The chain is Anoctamin-4 (ANO4) from Homo sapiens (Human).